A 223-amino-acid chain; its full sequence is Retbindin (223 aa).

The N-terminal stretch at 1–30 (MANRGHTQPRALAWALGLTLVWILLGACGG) is a signal peptide. Disulfide bonds link C73/C143, C80/C120, C113/C157, and C126/C139.

This sequence belongs to the folate receptor family. Post-translationally, not N-glycosylated.

Its subcellular location is the secreted. It localises to the extracellular space. The protein localises to the extracellular matrix. It is found in the interphotoreceptor matrix. The protein resides in the cell membrane. Its function is as follows. Riboflavin-binding protein which might have a role in retinal flavin transport. This is Retbindin (RTBDN) from Canis lupus familiaris (Dog).